The sequence spans 720 residues: Methionine--tRNA ligase (720 aa).

The short motif at 27–37 is the 'HIGH' region element; it reads PYANGQIHIGH. Cys158, Cys161, Cys171, and Cys174 together coordinate Zn(2+). Positions 348-352 match the 'KMSKS' region motif; that stretch reads KMSKS. Lys351 serves as a coordination point for ATP. The 107-residue stretch at 614 to 720 folds into the tRNA-binding domain; the sequence is DFAKVDLRIA…SGAKPGMRVK (107 aa).

Belongs to the class-I aminoacyl-tRNA synthetase family. MetG type 1 subfamily. As to quaternary structure, homodimer. The cofactor is Zn(2+).

It localises to the cytoplasm. The catalysed reaction is tRNA(Met) + L-methionine + ATP = L-methionyl-tRNA(Met) + AMP + diphosphate. Is required not only for elongation of protein synthesis but also for the initiation of all mRNA translation through initiator tRNA(fMet) aminoacylation. This is Methionine--tRNA ligase from Burkholderia ambifaria (strain ATCC BAA-244 / DSM 16087 / CCUG 44356 / LMG 19182 / AMMD) (Burkholderia cepacia (strain AMMD)).